The primary structure comprises 371 residues: MKISNSKTSLEFERNKDFFQVRLESTQFKEAVLKELSDKVIVNEDNETWVLSYPVPEAAKSLASATRLAKTRLERLKLAQKLATLSGLENQFKIPFLHPENILLMGETLFVVHFGLHKLLAPFDMTPVDFLKSYKALIFYIFNSKVPFESLVSGSLAMNDKFSQTINSFESTQEIAEFIDEELQKETEKINRNIAFVSKGRYRFFKYFGTLAIILALVLGWFTYYYYSNSQKQNAIITAQTDFLTNNYDKTQTDLQNYSPSKLPKSARYILAVSSVNLSDLTTTQKQAILNNISTKSDDNTLNYWVYSGRGDFKQALNLAQNLGDVQLTLLAYTNLYETTKLNTTMDGAKKQQLLDEYNKKIQELTKNLGK.

This is an uncharacterized protein from Clostridium acetobutylicum (strain ATCC 824 / DSM 792 / JCM 1419 / IAM 19013 / LMG 5710 / NBRC 13948 / NRRL B-527 / VKM B-1787 / 2291 / W).